Reading from the N-terminus, the 123-residue chain is Small ribosomal subunit protein uS12c (123 aa).

It belongs to the universal ribosomal protein uS12 family. Part of the 30S ribosomal subunit.

The protein localises to the plastid. It localises to the chloroplast. In terms of biological role, with S4 and S5 plays an important role in translational accuracy. Located at the interface of the 30S and 50S subunits. This is Small ribosomal subunit protein uS12c (rps12) from Huperzia lucidula (Shining clubmoss).